A 140-amino-acid polypeptide reads, in one-letter code: uncharacterized protein (140 aa).

The next 2 helical transmembrane spans lie at 33–53 and 59–79; these read LLYV…KYYF and SLLF…FMGF. Residues 89–104 are compositionally biased toward basic and acidic residues; the sequence is EAEPDYRKKQESKNQD. A disordered region spans residues 89-140; it reads EAEPDYRKKQESKNQDFLKSQSNEPLEYASSSAVELEKEKNTREGLTILESS. The span at 105–121 shows a compositional bias: polar residues; the sequence is FLKSQSNEPLEYASSSA.

It localises to the membrane. This is an uncharacterized protein from Schizosaccharomyces pombe (strain 972 / ATCC 24843) (Fission yeast).